A 126-amino-acid chain; its full sequence is Holo-[acyl-carrier-protein] synthase (126 aa).

Residues aspartate 8 and glutamate 57 each coordinate Mg(2+).

It belongs to the P-Pant transferase superfamily. AcpS family. It depends on Mg(2+) as a cofactor.

It is found in the cytoplasm. The enzyme catalyses apo-[ACP] + CoA = holo-[ACP] + adenosine 3',5'-bisphosphate + H(+). Functionally, transfers the 4'-phosphopantetheine moiety from coenzyme A to a Ser of acyl-carrier-protein. The chain is Holo-[acyl-carrier-protein] synthase from Leptospira interrogans serogroup Icterohaemorrhagiae serovar copenhageni (strain Fiocruz L1-130).